The following is a 190-amino-acid chain: CASP-like protein 1E2 (190 aa).

Positions Met1–Leu21 are disordered. At Met1 to Glu28 the chain is on the cytoplasmic side. The chain crosses the membrane as a helical span at residues Leu29–Ala49. At Lys50 to Asn83 the chain is on the extracellular side. A helical transmembrane segment spans residues Ile84–Ser104. The Cytoplasmic segment spans residues Arg105–Lys111. Residues Leu112–Gly132 form a helical membrane-spanning segment. Over Ala133–Arg163 the chain is Extracellular. Residues Ala164–Leu184 traverse the membrane as a helical segment. Over Asp185–Pro190 the chain is Cytoplasmic.

It belongs to the Casparian strip membrane proteins (CASP) family. Homodimer and heterodimers.

The protein resides in the cell membrane. The sequence is that of CASP-like protein 1E2 from Arabidopsis thaliana (Mouse-ear cress).